Here is a 201-residue protein sequence, read N- to C-terminus: Adenylyl-sulfate kinase (201 aa).

ATP is bound at residue 35-42; it reads GLSGSGKS. Catalysis depends on S109, which acts as the Phosphoserine intermediate.

The protein belongs to the APS kinase family.

The catalysed reaction is adenosine 5'-phosphosulfate + ATP = 3'-phosphoadenylyl sulfate + ADP + H(+). The protein operates within sulfur metabolism; hydrogen sulfide biosynthesis; sulfite from sulfate: step 2/3. Catalyzes the synthesis of activated sulfate. The sequence is that of Adenylyl-sulfate kinase from Shigella boydii serotype 18 (strain CDC 3083-94 / BS512).